Reading from the N-terminus, the 165-residue chain is Ribosome maturation factor RimM (165 aa).

A PRC barrel domain is found at 92 to 163; it reads EARHYWADLE…RVVVDPPEGL (72 aa).

The protein belongs to the RimM family. As to quaternary structure, binds ribosomal protein uS19.

Its subcellular location is the cytoplasm. Functionally, an accessory protein needed during the final step in the assembly of 30S ribosomal subunit, possibly for assembly of the head region. Essential for efficient processing of 16S rRNA. May be needed both before and after RbfA during the maturation of 16S rRNA. It has affinity for free ribosomal 30S subunits but not for 70S ribosomes. This Anaeromyxobacter sp. (strain Fw109-5) protein is Ribosome maturation factor RimM.